We begin with the raw amino-acid sequence, 746 residues long: Zinc finger protein 366 (746 aa).

Residues 1–64 (MQKAMKMVKD…FRYEPSPGDL (64 aa)) are disordered. 11 consecutive C2H2-type zinc fingers follow at residues 250–272 (WQCP…ILGH), 278–300 (HACS…MLTH), 306–328 (HKCQ…MMQH), 334–356 (HNCR…EAKH), 362–384 (NICV…LTTH), 390–412 (YNCS…MMKH), 418–440 (YICS…SLTH), 446–468 (HKCG…VLIH), 474–496 (YQCH…MIVH), 502–524 (FKCK…LHLH), and 530–553 (FKCL…KVKH). Residues 452 to 746 (GREFTLLANM…MEKQAVLLGI (295 aa)) form an interaction with NRIP1 region. The short motif at 587-591 (PFDLS) is the PXDLS element. The interval 587–689 (PFDLSQKRSA…DHEGSDIDCE (103 aa)) is disordered. The span at 613–627 (CQEEEEEAGEEDNCY) shows a compositional bias: acidic residues. A compositionally biased stretch (basic and acidic residues) spans 675–689 (EDRSEDHEGSDIDCE).

Interacts with ESR1 and NRIP1. Interacts (via PXDLS motif) with CTBP1. As to expression, expressed in immature and mature dendritic cells (DCs).

The protein localises to the nucleus. Its function is as follows. Has transcriptional repression activity. Acts as a corepressor of ESR1; the function seems to involve CTBP1 and histone deacetylases. This Mus musculus (Mouse) protein is Zinc finger protein 366.